Consider the following 273-residue polypeptide: L-fucose dehydrogenase (273 aa).

12 residues coordinate NAD(+): arginine 19, isoleucine 21, aspartate 40, lysine 41, aspartate 62, valine 63, asparagine 89, tyrosine 154, lysine 158, isoleucine 187, threonine 189, and leucine 191. The active-site Proton acceptor is the tyrosine 154.

It belongs to the short-chain dehydrogenases/reductases (SDR) family. Homotetramer.

It localises to the cytoplasm. The enzyme catalyses L-fucose + NAD(+) = L-fucono-1,5-lactone + NADH + H(+). The catalysed reaction is D-arabinose + NAD(+) = D-arabinono-1,5-lactone + NADH + H(+). It carries out the reaction L-galactose + NAD(+) = L-galactono-1,5-lactone + NADH + H(+). Its pathway is carbohydrate degradation; L-fucose degradation. In terms of biological role, catalyzes the NAD(+)-dependent oxidation of L-fucose, yielding L-fucono-1,5-lactone, which rapidly converts spontaneously to L-fucone-1,4-lactone. Can also act on D-arabinose and L-galactose, with lower catalytic efficiency. Does not use NADPH. May be the initial enzyme of the putative L-fucose degradation pathway in mammals. This chain is L-fucose dehydrogenase, found in Mus musculus (Mouse).